Reading from the N-terminus, the 177-residue chain is Large ribosomal subunit protein uL6 (177 aa).

The protein belongs to the universal ribosomal protein uL6 family. In terms of assembly, part of the 50S ribosomal subunit.

In terms of biological role, this protein binds to the 23S rRNA, and is important in its secondary structure. It is located near the subunit interface in the base of the L7/L12 stalk, and near the tRNA binding site of the peptidyltransferase center. The chain is Large ribosomal subunit protein uL6 from Salmonella newport (strain SL254).